A 151-amino-acid polypeptide reads, in one-letter code: FAD synthase (151 aa).

Residues 12–13, 17–20, Asp97, and Tyr125 each bind ATP; these read TF and HPGH.

This sequence belongs to the archaeal FAD synthase family. In terms of assembly, homodimer. Requires a divalent metal cation as cofactor.

The enzyme catalyses FMN + ATP + H(+) = FAD + diphosphate. It functions in the pathway cofactor biosynthesis; FAD biosynthesis; FAD from FMN: step 1/1. Functionally, catalyzes the transfer of the AMP portion of ATP to flavin mononucleotide (FMN) to produce flavin adenine dinucleotide (FAD) coenzyme. In Methanococcus vannielii (strain ATCC 35089 / DSM 1224 / JCM 13029 / OCM 148 / SB), this protein is FAD synthase.